Consider the following 153-residue polypeptide: Regulatory protein RecX (153 aa).

This sequence belongs to the RecX family.

It is found in the cytoplasm. In terms of biological role, modulates RecA activity. The protein is Regulatory protein RecX of Syntrophotalea carbinolica (strain DSM 2380 / NBRC 103641 / GraBd1) (Pelobacter carbinolicus).